Reading from the N-terminus, the 69-residue chain is NAD(P)H-quinone oxidoreductase subunit L (69 aa).

2 helical membrane passes run 5–25 (LILL…ITYF) and 40–60 (GFMY…SPFL).

This sequence belongs to the complex I NdhL subunit family. As to quaternary structure, NDH-1 can be composed of about 15 different subunits; different subcomplexes with different compositions have been identified which probably have different functions.

Its subcellular location is the cellular thylakoid membrane. It carries out the reaction a plastoquinone + NADH + (n+1) H(+)(in) = a plastoquinol + NAD(+) + n H(+)(out). It catalyses the reaction a plastoquinone + NADPH + (n+1) H(+)(in) = a plastoquinol + NADP(+) + n H(+)(out). Its function is as follows. NDH-1 shuttles electrons from an unknown electron donor, via FMN and iron-sulfur (Fe-S) centers, to quinones in the respiratory and/or the photosynthetic chain. The immediate electron acceptor for the enzyme in this species is believed to be plastoquinone. Couples the redox reaction to proton translocation, and thus conserves the redox energy in a proton gradient. Cyanobacterial NDH-1 also plays a role in inorganic carbon-concentration. The protein is NAD(P)H-quinone oxidoreductase subunit L of Acaryochloris marina (strain MBIC 11017).